The primary structure comprises 128 residues: Transcription antitermination protein NusB (128 aa).

This sequence belongs to the NusB family.

Functionally, involved in transcription antitermination. Required for transcription of ribosomal RNA (rRNA) genes. Binds specifically to the boxA antiterminator sequence of the ribosomal RNA (rrn) operons. The chain is Transcription antitermination protein NusB from Listeria innocua serovar 6a (strain ATCC BAA-680 / CLIP 11262).